The chain runs to 148 residues: 3-dehydroquinate dehydratase (148 aa).

The Proton acceptor role is filled by Tyr-24. Positions 80, 86, and 93 each coordinate substrate. His-106 acts as the Proton donor in catalysis. Residues 107 to 108 (IS) and Arg-117 each bind substrate.

The protein belongs to the type-II 3-dehydroquinase family. As to quaternary structure, homododecamer.

It carries out the reaction 3-dehydroquinate = 3-dehydroshikimate + H2O. The protein operates within metabolic intermediate biosynthesis; chorismate biosynthesis; chorismate from D-erythrose 4-phosphate and phosphoenolpyruvate: step 3/7. Its function is as follows. Catalyzes a trans-dehydration via an enolate intermediate. The chain is 3-dehydroquinate dehydratase from Acidovorax ebreus (strain TPSY) (Diaphorobacter sp. (strain TPSY)).